Here is a 732-residue protein sequence, read N- to C-terminus: Ubiquitin carboxyl-terminal hydrolase 21 (732 aa).

Over residues Met1–Ser10 the composition is skewed to pro residues. Residues Met1–Leu111 are disordered. Composition is skewed to polar residues over residues Asn11–Thr31 and Val38–Ala53. Low complexity predominate over residues Ser55 to Lys69. Positions Ala163–Glu469 constitute a USP domain. The active-site Nucleophile is the Cys172. Residue His428 is the Proton acceptor of the active site. The segment at Lys534–Leu732 is disordered. Residues Ser540–Ala551 are compositionally biased toward low complexity. The span at Ala583 to Ser609 shows a compositional bias: basic and acidic residues. A compositionally biased stretch (basic residues) spans Lys719–Leu732.

It belongs to the peptidase C19 family.

The catalysed reaction is Thiol-dependent hydrolysis of ester, thioester, amide, peptide and isopeptide bonds formed by the C-terminal Gly of ubiquitin (a 76-residue protein attached to proteins as an intracellular targeting signal).. Its function is as follows. Recognizes and hydrolyzes the peptide bond at the C-terminal Gly of ubiquitin. Involved in the processing of poly-ubiquitin precursors as well as that of ubiquitinated proteins. The chain is Ubiquitin carboxyl-terminal hydrolase 21 (UBP21) from Arabidopsis thaliana (Mouse-ear cress).